A 424-amino-acid chain; its full sequence is Kynureninase (424 aa).

Pyridoxal 5'-phosphate-binding positions include L106, T107, 134–137 (FPSD), D219, H222, and Y244. K245 is modified (N6-(pyridoxal phosphate)lysine). The pyridoxal 5'-phosphate site is built by W274 and N302.

It belongs to the kynureninase family. As to quaternary structure, homodimer. Pyridoxal 5'-phosphate serves as cofactor.

It catalyses the reaction L-kynurenine + H2O = anthranilate + L-alanine + H(+). The enzyme catalyses 3-hydroxy-L-kynurenine + H2O = 3-hydroxyanthranilate + L-alanine + H(+). Its pathway is amino-acid degradation; L-kynurenine degradation; L-alanine and anthranilate from L-kynurenine: step 1/1. It participates in cofactor biosynthesis; NAD(+) biosynthesis; quinolinate from L-kynurenine: step 2/3. Functionally, catalyzes the cleavage of L-kynurenine (L-Kyn) and L-3-hydroxykynurenine (L-3OHKyn) into anthranilic acid (AA) and 3-hydroxyanthranilic acid (3-OHAA), respectively. This is Kynureninase from Xanthomonas campestris pv. campestris (strain 8004).